Here is a 246-residue protein sequence, read N- to C-terminus: Acetoacetate decarboxylase (246 aa).

The active-site Schiff-base intermediate with acetoacetate is Lys-116.

The protein belongs to the ADC family.

The catalysed reaction is acetoacetate + H(+) = acetone + CO2. Functionally, catalyzes the conversion of acetoacetate to acetone and carbon dioxide. The protein is Acetoacetate decarboxylase of Burkholderia cenocepacia (strain HI2424).